Consider the following 292-residue polypeptide: ATP synthase gamma chain (292 aa).

The protein belongs to the ATPase gamma chain family. F-type ATPases have 2 components, CF(1) - the catalytic core - and CF(0) - the membrane proton channel. CF(1) has five subunits: alpha(3), beta(3), gamma(1), delta(1), epsilon(1). CF(0) has three main subunits: a, b and c.

It localises to the cell inner membrane. In terms of biological role, produces ATP from ADP in the presence of a proton gradient across the membrane. The gamma chain is believed to be important in regulating ATPase activity and the flow of protons through the CF(0) complex. This chain is ATP synthase gamma chain, found in Nitrobacter hamburgensis (strain DSM 10229 / NCIMB 13809 / X14).